We begin with the raw amino-acid sequence, 659 residues long: MFKPEEIVKVEIITLARFRDTLLTYLHEMGVAQLDEVPIEGIQRDTPNEFYRKATSYSITLSRLIDTVKHYLPPRKGGIKEFIFPEEKKKRKYKYRGIEELIKDVEKFLGEAEPKIREVESEVSRLNNEISALKDSLNALELLSSLNIEIENLRGRSFLSVEVGLVDREKVENLIKELEEIAEGRVFTLRKDLAAKSLLVVVSLRKDSGKVISLLAKYGFEKIEIPEGEGLPKDLIPKYIERIKGKEKELEDVKLKGREIAEKYYEDLVFYKELMDNEREKSNFLSYLVRTEMTFGLLAWVPKKDVEKVVEGVKRITNGIAYIEVREPSEEEIENVPVKLKNPEFISHFEMLTEMYGVPKYNEIDPTPILAFTYSFFFGFMLTDFVYGLLLGVISALLVKGHSKLKDGTWKFAKIMLWASAFTMVLGILFGSYCGNLLDMAGVKVPRLLDTMSEALTVLVMALAIGLGHLFTGYILGFIVNWKNGDKRAAILEQLPWVFIIIGITLFALSSKLGIPQIAFKAVFGVGLALFVVGEIVNNKGMAVLLTISDFFGFIGNWLSYARLMALALATSGIALVINIIANMVWGLKIGPIPLGILIGIVILIGGHIFSTAINALGAFVHALRLHYVEFFGTFYSGEGRKFEPFAAKREVSELEIES.

The next 8 helical transmembrane spans lie at 376–396 (FFFG…VISA), 415–435 (IMLW…SYCG), 460–480 (VMAL…GFIV), 489–509 (AAIL…LFAL), 513–533 (LGIP…LFVV), 542–562 (MAVL…LSYA), 566–586 (ALAL…NMVW), and 590–610 (IGPI…GHIF).

This sequence belongs to the V-ATPase 116 kDa subunit family. As to quaternary structure, has multiple subunits with at least A(3), B(3), C, D, E, F, H, I and proteolipid K(x).

Its subcellular location is the cell membrane. Functionally, component of the A-type ATP synthase that produces ATP from ADP in the presence of a proton gradient across the membrane. In Pyrococcus abyssi (strain GE5 / Orsay), this protein is A-type ATP synthase subunit I.